The chain runs to 285 residues: ATP phosphoribosyltransferase (285 aa).

The protein belongs to the ATP phosphoribosyltransferase family. Long subfamily. It depends on Mg(2+) as a cofactor.

The protein localises to the cytoplasm. The catalysed reaction is 1-(5-phospho-beta-D-ribosyl)-ATP + diphosphate = 5-phospho-alpha-D-ribose 1-diphosphate + ATP. It participates in amino-acid biosynthesis; L-histidine biosynthesis; L-histidine from 5-phospho-alpha-D-ribose 1-diphosphate: step 1/9. Its activity is regulated as follows. Feedback inhibited by histidine. Catalyzes the condensation of ATP and 5-phosphoribose 1-diphosphate to form N'-(5'-phosphoribosyl)-ATP (PR-ATP). Has a crucial role in the pathway because the rate of histidine biosynthesis seems to be controlled primarily by regulation of HisG enzymatic activity. The sequence is that of ATP phosphoribosyltransferase from Streptomyces coelicolor (strain ATCC BAA-471 / A3(2) / M145).